Here is a 111-residue protein sequence, read N- to C-terminus: Large ribosomal subunit protein uL22 (111 aa).

The protein belongs to the universal ribosomal protein uL22 family. Part of the 50S ribosomal subunit.

Its function is as follows. This protein binds specifically to 23S rRNA; its binding is stimulated by other ribosomal proteins, e.g. L4, L17, and L20. It is important during the early stages of 50S assembly. It makes multiple contacts with different domains of the 23S rRNA in the assembled 50S subunit and ribosome. Functionally, the globular domain of the protein is located near the polypeptide exit tunnel on the outside of the subunit, while an extended beta-hairpin is found that lines the wall of the exit tunnel in the center of the 70S ribosome. In Clostridioides difficile (strain 630) (Peptoclostridium difficile), this protein is Large ribosomal subunit protein uL22.